The following is a 194-amino-acid chain: Protein GrpE (194 aa).

The segment at 1–44 is disordered; that stretch reads MAEEKQNEELNEQEELNETEAETAEAEQTAAEADAPAEETQTEM. Over residues 9-25 the composition is skewed to acidic residues; sequence ELNEQEELNETEAETAE.

It belongs to the GrpE family. As to quaternary structure, homodimer.

The protein resides in the cytoplasm. In terms of biological role, participates actively in the response to hyperosmotic and heat shock by preventing the aggregation of stress-denatured proteins, in association with DnaK and GrpE. It is the nucleotide exchange factor for DnaK and may function as a thermosensor. Unfolded proteins bind initially to DnaJ; upon interaction with the DnaJ-bound protein, DnaK hydrolyzes its bound ATP, resulting in the formation of a stable complex. GrpE releases ADP from DnaK; ATP binding to DnaK triggers the release of the substrate protein, thus completing the reaction cycle. Several rounds of ATP-dependent interactions between DnaJ, DnaK and GrpE are required for fully efficient folding. This chain is Protein GrpE, found in Bacillus licheniformis (strain ATCC 14580 / DSM 13 / JCM 2505 / CCUG 7422 / NBRC 12200 / NCIMB 9375 / NCTC 10341 / NRRL NRS-1264 / Gibson 46).